The following is a 256-amino-acid chain: Probable ABC transporter ATP-binding protein SPy_0285/M5005_Spy0242 (256 aa).

The ABC transporter domain maps to 4–246; that stretch reads LEINNLHVSI…EKEGYAGIAQ (243 aa). 36 to 43 is a binding site for ATP; the sequence is GPNGTGKS.

It belongs to the ABC transporter superfamily. Ycf16 family.

The protein resides in the cell membrane. The polypeptide is Probable ABC transporter ATP-binding protein SPy_0285/M5005_Spy0242 (Streptococcus pyogenes serotype M1).